Reading from the N-terminus, the 281-residue chain is 16S rRNA (guanine(1405)-N(7))-methyltransferase (281 aa).

S-adenosyl-L-methionine-binding positions include tyrosine 60, 105 to 107 (HTS), arginine 111, glycine 136, aspartate 160, 186 to 187 (QG), phenylalanine 203, and glutamine 212.

The protein belongs to the methyltransferase superfamily. Aminoglycoside resistance family.

The enzyme catalyses guanosine(1405) in 16S rRNA + S-adenosyl-L-methionine = N(7)-methylguanosine(1405) in 16S rRNA + S-adenosyl-L-homocysteine. Specifically methylates the N(7) position of guanine 1405 in 16S rRNA. Confers resistance to various aminoglycosides, including gentamicin and kanamycin. In Proteus mirabilis, this protein is 16S rRNA (guanine(1405)-N(7))-methyltransferase (rmtC).